The chain runs to 392 residues: Peptidoglycan hydrolase PcsB (392 aa).

The signal sequence occupies residues Met-1–Ala-27. Coiled coils occupy residues Ile-34 to Asn-96 and Thr-191 to Glu-227. Residues Gln-47 to Ser-267 form an interacts with large extracellular loop of FtsX region. In terms of domain architecture, Peptidase C51 spans Ser-267–Tyr-390.

In terms of assembly, homodimer. Interacts (via N-terminal coiled coil domain) with FtsX (via large extracellular loop). This interaction directs PcsB to equatorial and septal sites of dividing cells. Interacts with FtsE.

It is found in the cell membrane. The protein resides in the cell septum. The protein localises to the secreted. With respect to regulation, lacks peptidoglycan-hydrolase activity in vitro, probably due to auto-inhibition by the CC domain. In the homodimer, interaction between the CC domain in one monomer and the hydrolase active site in the peptidase C51/CHAP domain in the other monomer probably mediates auto-inhibition of the hydrolase activity. Peptidoglycan-hydrolase activity. Required in maintaining normal growth and cellular morphology. Involved in splitting of the septum during cell division. The chain is Peptidoglycan hydrolase PcsB from Streptococcus pneumoniae serotype 2 (strain D39 / NCTC 7466).